The sequence spans 265 residues: Methyl-coenzyme M reductase II subunit gamma (265 aa).

Arginine 123 serves as a coordination point for coenzyme M.

Belongs to the methyl-coenzyme M reductase gamma subunit family. As to quaternary structure, MCR is a hexamer of two alpha, two beta, and two gamma chains, forming a dimer of heterotrimers. Coenzyme F430 is required as a cofactor.

The enzyme catalyses coenzyme B + methyl-coenzyme M = methane + coenzyme M-coenzyme B heterodisulfide. It participates in one-carbon metabolism; methyl-coenzyme M reduction; methane from methyl-coenzyme M: step 1/1. In terms of biological role, component of the methyl-coenzyme M reductase (MCR) I that catalyzes the reductive cleavage of methyl-coenzyme M (CoM-S-CH3 or 2-(methylthio)ethanesulfonate) using coenzyme B (CoB or 7-mercaptoheptanoylthreonine phosphate) as reductant which results in the production of methane and the mixed heterodisulfide of CoB and CoM (CoM-S-S-CoB). This is the final step in methanogenesis. This chain is Methyl-coenzyme M reductase II subunit gamma (mrtG), found in Methanothermobacter thermautotrophicus (strain ATCC 29096 / DSM 1053 / JCM 10044 / NBRC 100330 / Delta H) (Methanobacterium thermoautotrophicum).